The chain runs to 137 residues: Probable disulfide formation protein C (137 aa).

The helical transmembrane segment at 6-25 (ENLMLGSWLTALTAMLGSLY) threads the bilayer. A disulfide bond links cysteine 35 and cysteine 38. 2 helical membrane-spanning segments follow: residues 40-59 (YQRI…YLKR) and 66-83 (YSLW…YHYS). Residues cysteine 97 and cysteine 102 are joined by a disulfide bond. A helical membrane pass occupies residues 111 to 133 (GFVTIPFLAFTAFVIIFICSLLI).

Belongs to the DsbB family. BdbC subfamily.

The protein resides in the cell membrane. In terms of biological role, required for disulfide bond formation in some proteins. This Halalkalibacterium halodurans (strain ATCC BAA-125 / DSM 18197 / FERM 7344 / JCM 9153 / C-125) (Bacillus halodurans) protein is Probable disulfide formation protein C.